The sequence spans 283 residues: Pantothenate synthetase (283 aa).

Residue 26–33 coordinates ATP; the sequence is MGNLHDGH. Residue His-33 is the Proton donor of the active site. Residue Gln-57 participates in (R)-pantoate binding. Residue Gln-57 participates in beta-alanine binding. 148–151 is an ATP binding site; the sequence is GKKD. Gln-154 contacts (R)-pantoate. ATP is bound by residues Ala-177 and 185-188; that span reads LSSR.

It belongs to the pantothenate synthetase family. As to quaternary structure, homodimer.

The protein localises to the cytoplasm. It catalyses the reaction (R)-pantoate + beta-alanine + ATP = (R)-pantothenate + AMP + diphosphate + H(+). It participates in cofactor biosynthesis; (R)-pantothenate biosynthesis; (R)-pantothenate from (R)-pantoate and beta-alanine: step 1/1. Functionally, catalyzes the condensation of pantoate with beta-alanine in an ATP-dependent reaction via a pantoyl-adenylate intermediate. The polypeptide is Pantothenate synthetase (Delftia acidovorans (strain DSM 14801 / SPH-1)).